The primary structure comprises 267 residues: Tryptophan synthase alpha chain (267 aa).

Catalysis depends on proton acceptor residues glutamate 47 and aspartate 58.

It belongs to the TrpA family. As to quaternary structure, tetramer of two alpha and two beta chains.

The enzyme catalyses (1S,2R)-1-C-(indol-3-yl)glycerol 3-phosphate + L-serine = D-glyceraldehyde 3-phosphate + L-tryptophan + H2O. It participates in amino-acid biosynthesis; L-tryptophan biosynthesis; L-tryptophan from chorismate: step 5/5. In terms of biological role, the alpha subunit is responsible for the aldol cleavage of indoleglycerol phosphate to indole and glyceraldehyde 3-phosphate. The protein is Tryptophan synthase alpha chain of Chlorobium phaeobacteroides (strain DSM 266 / SMG 266 / 2430).